A 231-amino-acid polypeptide reads, in one-letter code: SrfA-induced gene F protein (231 aa).

The chain is SrfA-induced gene F protein (sigF) from Dictyostelium discoideum (Social amoeba).